Here is a 396-residue protein sequence, read N- to C-terminus: MSISTLQKEINKQLDGCFEEMVEIRRHFHMYPELSFQEEKTAAFIASYYESLGVPIRTNVGGRGVLANIEGSEPGPTVALRADFDALPIQDEKDVPYASKVPGVMHACGHDGHTAALLAVAKVLHQNRHELKGTFVMIHQHAEEYYPGGAKPMIDDGCLENTDVIFGTHLWATEPLGTILCRPGAVMAAADRFTIKVFGKGGHGAHPHDTKDAVLIGSQIVSSLQHIVSRKVNPIQSAVISTGSFIADNPFNVIADQAVLIGTARSFDENVRDILEKEIEAVVKGICSMHGASYEYTYEQGYPAVVNHPAETNHLVSTAKNTEGVQQVIDGEPQMGGEDFAYYLQNVKGTFFFTGAAPEQPERVYSHHHPKFDINEKAMLTAAKVLAGAAITYHQL.

Asp85 is an active-site residue. The active-site Proton acceptor is Glu143. Residues Glu144, Arg182, and His368 each coordinate Zn(2+).

Belongs to the peptidase M20A family. Zn(2+) is required as a cofactor. Co(2+) serves as cofactor.

The protein is Putative amidohydrolase YhaA (yhaA) of Bacillus subtilis (strain 168).